Consider the following 396-residue polypeptide: Putative peptide chain release factor 1, mitochondrial (396 aa).

Position 270 is an N5-methylglutamine (Gln270).

It belongs to the prokaryotic/mitochondrial release factor family. Methylation of glutamine in the GGQ triplet is conserved from bacteria to mammals.

It localises to the mitochondrion. The polypeptide is Putative peptide chain release factor 1, mitochondrial (Schizosaccharomyces pombe (strain 972 / ATCC 24843) (Fission yeast)).